The sequence spans 228 residues: Type II methyltransferase M.HhaII (228 aa).

Belongs to the N(4)/N(6)-methyltransferase family.

It carries out the reaction a 2'-deoxyadenosine in DNA + S-adenosyl-L-methionine = an N(6)-methyl-2'-deoxyadenosine in DNA + S-adenosyl-L-homocysteine + H(+). In terms of biological role, a beta subtype methylase, recognizes the double-stranded sequence 5'-GANTC-3', methylates A-2 on both strands, and protects the DNA from cleavage by the HhaII endonuclease. The protein is Type II methyltransferase M.HhaII of Haemophilus parahaemolyticus.